The following is a 92-amino-acid chain: PqqA binding protein (92 aa).

It belongs to the PqqD family. As to quaternary structure, monomer. Interacts with PqqE.

The protein operates within cofactor biosynthesis; pyrroloquinoline quinone biosynthesis. Its function is as follows. Functions as a PqqA binding protein and presents PqqA to PqqE, in the pyrroloquinoline quinone (PQQ) biosynthetic pathway. The sequence is that of PqqA binding protein from Stutzerimonas stutzeri (strain A1501) (Pseudomonas stutzeri).